The chain runs to 407 residues: Formate-dependent phosphoribosylglycinamide formyltransferase (407 aa).

Residues 28 to 29 (EL) and E88 contribute to the N(1)-(5-phospho-beta-D-ribosyl)glycinamide site. ATP is bound by residues R121, K162, 167–172 (SSGKGQ), 202–205 (EGFI), and E210. The ATP-grasp domain occupies 126 to 320 (RLAAEELGVA…EFELHAKAIL (195 aa)). Mg(2+) contacts are provided by E279 and E291. Residues D298, K367, and 374–375 (RR) contribute to the N(1)-(5-phospho-beta-D-ribosyl)glycinamide site.

This sequence belongs to the PurK/PurT family. In terms of assembly, homodimer.

It catalyses the reaction N(1)-(5-phospho-beta-D-ribosyl)glycinamide + formate + ATP = N(2)-formyl-N(1)-(5-phospho-beta-D-ribosyl)glycinamide + ADP + phosphate + H(+). The protein operates within purine metabolism; IMP biosynthesis via de novo pathway; N(2)-formyl-N(1)-(5-phospho-D-ribosyl)glycinamide from N(1)-(5-phospho-D-ribosyl)glycinamide (formate route): step 1/1. Its function is as follows. Involved in the de novo purine biosynthesis. Catalyzes the transfer of formate to 5-phospho-ribosyl-glycinamide (GAR), producing 5-phospho-ribosyl-N-formylglycinamide (FGAR). Formate is provided by PurU via hydrolysis of 10-formyl-tetrahydrofolate. The sequence is that of Formate-dependent phosphoribosylglycinamide formyltransferase from Herminiimonas arsenicoxydans.